The sequence spans 163 residues: Crossover junction endodeoxyribonuclease RuvC (163 aa).

Active-site residues include D4, E65, and D138. Residues D4, E65, and D138 each contribute to the Mg(2+) site.

Belongs to the RuvC family. Homodimer which binds Holliday junction (HJ) DNA. The HJ becomes 2-fold symmetrical on binding to RuvC with unstacked arms; it has a different conformation from HJ DNA in complex with RuvA. In the full resolvosome a probable DNA-RuvA(4)-RuvB(12)-RuvC(2) complex forms which resolves the HJ. Mg(2+) is required as a cofactor.

It is found in the cytoplasm. The enzyme catalyses Endonucleolytic cleavage at a junction such as a reciprocal single-stranded crossover between two homologous DNA duplexes (Holliday junction).. Functionally, the RuvA-RuvB-RuvC complex processes Holliday junction (HJ) DNA during genetic recombination and DNA repair. Endonuclease that resolves HJ intermediates. Cleaves cruciform DNA by making single-stranded nicks across the HJ at symmetrical positions within the homologous arms, yielding a 5'-phosphate and a 3'-hydroxyl group; requires a central core of homology in the junction. The consensus cleavage sequence is 5'-(A/T)TT(C/G)-3'. Cleavage occurs on the 3'-side of the TT dinucleotide at the point of strand exchange. HJ branch migration catalyzed by RuvA-RuvB allows RuvC to scan DNA until it finds its consensus sequence, where it cleaves and resolves the cruciform DNA. The sequence is that of Crossover junction endodeoxyribonuclease RuvC from Corynebacterium diphtheriae (strain ATCC 700971 / NCTC 13129 / Biotype gravis).